A 162-amino-acid chain; its full sequence is CASP-like protein 1C1 (162 aa).

Over 1-7 (MFSAKAR) the chain is Cytoplasmic. Residues 8–28 (WIVAVVLRVAAAGAAAVAAVL) form a helical membrane-spanning segment. Residues 29 to 52 (MAMSHDEVIVYGMEVQAKFRYTPS) lie on the Extracellular side of the membrane. Residues 53 to 73 (LVFFVAANAAVSACSLVVLLV) traverse the membrane as a helical segment. Residues 74–83 (PSSTSKLAAR) lie on the Cytoplasmic side of the membrane. A helical membrane pass occupies residues 84–104 (LLLMADVVLGMVLAGAFAAAG). At 105–135 (AMAELGKNGNSHAGWIAICVQVPLFCDRVRS) the chain is on the extracellular side. A helical membrane pass occupies residues 136–156 (ALVAGSATIVLYYLMLMYSIY). Residues 157–162 (TLPMFP) are Cytoplasmic-facing.

The protein belongs to the Casparian strip membrane proteins (CASP) family. In terms of assembly, homodimer and heterodimers.

The protein localises to the cell membrane. The polypeptide is CASP-like protein 1C1 (Oryza sativa subsp. japonica (Rice)).